Consider the following 71-residue polypeptide: Protein SlyX homolog (71 aa).

The protein belongs to the SlyX family.

This Rhodopseudomonas palustris (strain BisB5) protein is Protein SlyX homolog.